Reading from the N-terminus, the 520-residue chain is Cyclin-L2 (520 aa).

Position 2 is an N-acetylalanine (Ala2). Cyclin-like stretches follow at residues 83-185 (ELIQ…RVLK) and 198-282 (KIIV…KILQ). The segment at 316-520 (LPGGTQVLDG…DHPGHSRHRR (205 aa)) is disordered. Phosphoserine occurs at positions 330, 338, 348, and 351. The span at 357–367 (RRLEGAKKAKA) shows a compositional bias: basic and acidic residues. Residue Ser369 is modified to Phosphoserine. The span at 376 to 390 (KGRESRSRSRSREQS) shows a compositional bias: basic and acidic residues. The tract at residues 385–423 (RSREQSYSRSPSRSASPKRRKSDSGSTSGGSKSQSRSRS) is RS. A compositionally biased stretch (low complexity) spans 408–436 (SGSTSGGSKSQSRSRSRSDSPPRQAPRSA). Residues 441–454 (SEIRGSRKSKDCKY) show a composition bias toward basic and acidic residues. Positions 456–471 (QKPHKSRSRSSSRSRS) are enriched in basic residues. 2 stretches are compositionally biased toward basic and acidic residues: residues 472-481 (RSRERADNPG) and 489-514 (YYRDQRRERSRSYERTGRRYERDHPG).

It belongs to the cyclin family. Cyclin L subfamily. Interacts with CDK11A, CDK11B, CDK12, CDK13 and POLR2A, the hyperphosphorylated C-terminal domain (CTD) of RNA polymerase II. May form a ternary complex with CDK11B and casein kinase II (CKII). Interacts with pre-mRNA-splicing factors, including at least SRSF1, SRSF2 AND SRSF7/SLU7. As to expression, widely expressed.

It is found in the nucleus speckle. The protein resides in the nucleus. Its subcellular location is the nucleoplasm. Its function is as follows. Involved in pre-mRNA splicing. May induce cell death, possibly by acting on the transcription and RNA processing of apoptosis-related factors. The polypeptide is Cyclin-L2 (CCNL2) (Homo sapiens (Human)).